The chain runs to 644 residues: Sodium/potassium/calcium exchanger 3 (644 aa).

The signal sequence occupies residues 1 to 44 (MRPSGDEDRARRRRRRRRRRDLLLSQLCFLASVALLLWSLSSLR). The Extracellular portion of the chain corresponds to 45–107 (EQKELDLMDL…DIFTNEDRRQ (63 aa)). Residues asparagine 71 and asparagine 86 are each glycosylated (N-linked (GlcNAc...) asparagine). Residues 108 to 128 (GAVVLHVLCAIYMFYALAIVC) form a helical membrane-spanning segment. The Cytoplasmic segment spans residues 129-153 (DDFFVPSLEKICERLHLSEDVAGAT). An Alpha-1 repeat occupies 149–189 (VAGATFMAAGSSAPELFTSVIGVFITKGDVGVGTIVGSAVF). Residues 154–174 (FMAAGSSAPELFTSVIGVFIT) form a helical membrane-spanning segment. At 175 to 182 (KGDVGVGT) the chain is on the extracellular side. The chain crosses the membrane as a helical span at residues 183 to 203 (IVGSAVFNILCIIGVCGLFAG). Residues 204–210 (QVVALSS) lie on the Cytoplasmic side of the membrane. Residues 211–231 (WCLLRDSIYYTLSVIALIVFI) traverse the membrane as a helical segment. The Extracellular portion of the chain corresponds to 232 to 234 (YDE). A helical membrane pass occupies residues 235–255 (KVSWWESLVLVLMYLIYIVIM). Topologically, residues 256 to 484 (KYNACIHQCF…WFMVTFASST (229 aa)) are cytoplasmic. Serine 308 is subject to Phosphoserine. The tract at residues 405–442 (AEAGNETENENEDNENDEEEEEDEDDDEGPYTPFDTPS) is disordered. A compositionally biased stretch (acidic residues) spans 409-433 (NETENENEDNENDEEEEEDEDDDEG). Residues 485 to 505 (LWIAAFSYMMVWMVTIIGYTL) traverse the membrane as a helical segment. The Extracellular portion of the chain corresponds to 506-510 (GIPDV). Residues 511–531 (IMGITFLAAGTSVPDCMASLI) traverse the membrane as a helical segment. Residues 518–549 (AAGTSVPDCMASLIVARQGMGDMAVSNSIGSN) form an Alpha-2 repeat. The Cytoplasmic segment spans residues 532–549 (VARQGMGDMAVSNSIGSN). Residues 550-570 (VFDILIGLGLPWALQTLAVDY) form a helical membrane-spanning segment. Topologically, residues 571-580 (GSYIRLNSRG) are extracellular. A helical transmembrane segment spans residues 581-601 (LIYSVGLLLASVFVTVFGVHL). The Cytoplasmic portion of the chain corresponds to 602 to 615 (NKWQLDKKLGCGCL). Residues 616–636 (LLYGVFLCFSIMTEFNVFTFV) form a helical membrane-spanning segment. Residues 637–644 (NLPMCGDH) are Extracellular-facing.

The protein belongs to the Ca(2+):cation antiporter (CaCA) (TC 2.A.19) family. SLC24A subfamily. In terms of tissue distribution, abundant in the brain. Expressed at low levels in the aorta, uterus and intestine.

The protein resides in the cell membrane. It catalyses the reaction Ca(2+)(out) + K(+)(out) + 4 Na(+)(in) = Ca(2+)(in) + K(+)(in) + 4 Na(+)(out). Its function is as follows. Calcium, potassium:sodium antiporter that transports 1 Ca(2+) and 1 K(+) in exchange for 4 Na(+). The chain is Sodium/potassium/calcium exchanger 3 (SLC24A3) from Homo sapiens (Human).